The following is a 253-amino-acid chain: ATP synthase subunit a (253 aa).

6 consecutive transmembrane segments (helical) span residues 27 to 47 (ISFT…IGFF), 87 to 107 (FFPF…IGMV), 117 to 137 (IIVT…VGLI), 146 to 166 (LFAP…IEII), 196 to 216 (FTVM…LAFA), and 224 to 244 (LEFL…CVYL).

Belongs to the ATPase A chain family. F-type ATPases have 2 components, CF(1) - the catalytic core - and CF(0) - the membrane proton channel. CF(1) has five subunits: alpha(3), beta(3), gamma(1), delta(1), epsilon(1). CF(0) has three main subunits: a(1), b(2) and c(9-12). The alpha and beta chains form an alternating ring which encloses part of the gamma chain. CF(1) is attached to CF(0) by a central stalk formed by the gamma and epsilon chains, while a peripheral stalk is formed by the delta and b chains.

It is found in the cell inner membrane. Functionally, key component of the proton channel; it plays a direct role in the translocation of protons across the membrane. This Hyphomonas neptunium (strain ATCC 15444) protein is ATP synthase subunit a.